The sequence spans 228 residues: Type II methyltransferase M.HhaII (228 aa).

It belongs to the N(4)/N(6)-methyltransferase family.

The catalysed reaction is a 2'-deoxyadenosine in DNA + S-adenosyl-L-methionine = an N(6)-methyl-2'-deoxyadenosine in DNA + S-adenosyl-L-homocysteine + H(+). Functionally, a beta subtype methylase, recognizes the double-stranded sequence 5'-GANTC-3', methylates A-2 on both strands, and protects the DNA from cleavage by the HhaII endonuclease. The chain is Type II methyltransferase M.HhaII from Haemophilus parahaemolyticus.